The sequence spans 796 residues: Leucine--tRNA ligase (796 aa).

The 'HIGH' region signature appears at 40–51; that stretch reads PYPSASGLHVGH. A 'KMSKS' region motif is present at residues 569-573; that stretch reads KMSKS. Residue Lys572 coordinates ATP.

Belongs to the class-I aminoacyl-tRNA synthetase family.

The protein resides in the cytoplasm. The enzyme catalyses tRNA(Leu) + L-leucine + ATP = L-leucyl-tRNA(Leu) + AMP + diphosphate. In Bdellovibrio bacteriovorus (strain ATCC 15356 / DSM 50701 / NCIMB 9529 / HD100), this protein is Leucine--tRNA ligase.